Consider the following 125-residue polypeptide: MAEGNVFACHSTEGWRSKLQEAIDTKRLVAVDFTATWCGPCRVIGPVFVELSKKFPEIFFLKVDVDELRDVAQEWDVEAMPTFIFIKDGKAVDKVVGAKKDDLERKVAALAAAATTTEATLPAQA.

Residues 2–112 (AEGNVFACHS…LERKVAALAA (111 aa)) enclose the Thioredoxin domain. Catalysis depends on nucleophile residues Cys38 and Cys41. A disulfide bond links Cys38 and Cys41.

Belongs to the thioredoxin family. Plant H-type subfamily.

The protein localises to the cytoplasm. Its function is as follows. Participates in various redox reactions through the reversible oxidation of the active center dithiol to a disulfide. The H form is known to activate a number of cytosolic enzymes. The polypeptide is Thioredoxin H-type (SB09) (Picea mariana (Black spruce)).